Reading from the N-terminus, the 575-residue chain is Arginine--tRNA ligase (575 aa).

Residues 131–141 (ANPNGPLHIGH) carry the 'HIGH' region motif.

This sequence belongs to the class-I aminoacyl-tRNA synthetase family.

Its subcellular location is the cytoplasm. The enzyme catalyses tRNA(Arg) + L-arginine + ATP = L-arginyl-tRNA(Arg) + AMP + diphosphate. This is Arginine--tRNA ligase from Methanobrevibacter smithii (strain ATCC 35061 / DSM 861 / OCM 144 / PS).